The sequence spans 1030 residues: Calcium-transporting ATPase 4, plasma membrane-type (1030 aa).

The Cytoplasmic portion of the chain corresponds to 1–157; sequence MSNLLRDFEV…NRYTEKPARS (157 aa). Residues 19–30 form an interaction with calmodulin region; it reads ARQRWRSSVSIV. S28 is modified (phosphoserine). The chain crosses the membrane as a helical span at residues 158–178; the sequence is FLMFVWEALHDITLIILMVCA. Residues 179–196 are Lumenal-facing; sequence VVSIGVGVATEGFPRGMY. Residues 197-217 traverse the membrane as a helical segment; the sequence is DGTGILLSILLVVMVTAISDY. Residues 218–345 lie on the Cytoplasmic side of the membrane; it reads KQSLQFRDLD…EDETPLQVKL (128 aa). The helical transmembrane segment at 346 to 365 threads the bilayer; the sequence is NGVATIIGKIGLSFAVLTFV. The Lumenal portion of the chain corresponds to 366 to 395; the sequence is VLCIRFVLDKATSGSFTNWSSEDALTLLDY. Residues 396 to 413 traverse the membrane as a helical segment; it reads FAISVTIIVVAVPEGLPL. Residues 414–804 lie on the Cytoplasmic side of the membrane; sequence AVTLSLAFAM…RWGRAVYINI (391 aa). D451 functions as the 4-aspartylphosphate intermediate in the catalytic mechanism. 2 residues coordinate Mg(2+): D749 and D753. A helical transmembrane segment spans residues 805-823; sequence QKFVQFQLTVNVVALIINF. Topologically, residues 824-834 are lumenal; it reads VSACITGSAPL. Residues 835–855 traverse the membrane as a helical segment; the sequence is TAVQLLWVNMIMDTLGALALA. The Cytoplasmic portion of the chain corresponds to 856–875; that stretch reads TEPPNEGLMKRAPIARTASF. Residues 876-898 form a helical membrane-spanning segment; it reads ITKTMWRNIAGQSVYQLIVLGIL. Residues 899 to 910 lie on the Lumenal side of the membrane; it reads NFAGKSLLKLDG. A helical membrane pass occupies residues 911-932; it reads PDSTAVLNTVIFNSFVFCQVFN. At 933 to 950 the chain is on the cytoplasmic side; the sequence is EINSREIEKINVFKGMFN. The chain crosses the membrane as a helical span at residues 951–972; the sequence is SWVFTWVMTVTVVFQVIIVEFL. Over 973–982 the chain is Lumenal; sequence GAFASTVPLS. The helical transmembrane segment at 983–1004 threads the bilayer; it reads WQHWLLSILIGSLNMIVAVILK. At 1005–1030 the chain is on the cytoplasmic side; it reads CVPVESRHHHDGYDLLPSGPSSSNSA.

It belongs to the cation transport ATPase (P-type) (TC 3.A.3) family. Type IIB subfamily.

The protein localises to the vacuole membrane. It carries out the reaction Ca(2+)(in) + ATP + H2O = Ca(2+)(out) + ADP + phosphate + H(+). Its activity is regulated as follows. Activated by calmodulin. Functionally, this magnesium-dependent enzyme catalyzes the hydrolysis of ATP coupled with the translocation of calcium from the cytosol into small vacuoles. The sequence is that of Calcium-transporting ATPase 4, plasma membrane-type (ACA4) from Arabidopsis thaliana (Mouse-ear cress).